A 706-amino-acid polypeptide reads, in one-letter code: Ribosomal RNA large subunit methyltransferase K/L (706 aa).

The THUMP domain maps to 43–154 (LMYQSLLWSR…RDMASVALDL (112 aa)).

It belongs to the methyltransferase superfamily. RlmKL family.

The protein resides in the cytoplasm. The catalysed reaction is guanosine(2445) in 23S rRNA + S-adenosyl-L-methionine = N(2)-methylguanosine(2445) in 23S rRNA + S-adenosyl-L-homocysteine + H(+). The enzyme catalyses guanosine(2069) in 23S rRNA + S-adenosyl-L-methionine = N(2)-methylguanosine(2069) in 23S rRNA + S-adenosyl-L-homocysteine + H(+). Specifically methylates the guanine in position 2445 (m2G2445) and the guanine in position 2069 (m7G2069) of 23S rRNA. In Yersinia pestis bv. Antiqua (strain Antiqua), this protein is Ribosomal RNA large subunit methyltransferase K/L.